Consider the following 509-residue polypeptide: Bifunctional purine biosynthesis protein PurH (509 aa).

The MGS-like domain occupies 1 to 144; the sequence is MKRALISVSD…KNYAAVTVVV (144 aa).

This sequence belongs to the PurH family.

The catalysed reaction is (6R)-10-formyltetrahydrofolate + 5-amino-1-(5-phospho-beta-D-ribosyl)imidazole-4-carboxamide = 5-formamido-1-(5-phospho-D-ribosyl)imidazole-4-carboxamide + (6S)-5,6,7,8-tetrahydrofolate. It catalyses the reaction IMP + H2O = 5-formamido-1-(5-phospho-D-ribosyl)imidazole-4-carboxamide. It functions in the pathway purine metabolism; IMP biosynthesis via de novo pathway; 5-formamido-1-(5-phospho-D-ribosyl)imidazole-4-carboxamide from 5-amino-1-(5-phospho-D-ribosyl)imidazole-4-carboxamide (10-formyl THF route): step 1/1. The protein operates within purine metabolism; IMP biosynthesis via de novo pathway; IMP from 5-formamido-1-(5-phospho-D-ribosyl)imidazole-4-carboxamide: step 1/1. The protein is Bifunctional purine biosynthesis protein PurH of Listeria monocytogenes serotype 4b (strain F2365).